A 186-amino-acid polypeptide reads, in one-letter code: Dynactin subunit 3 (186 aa).

Alanine 2 is subject to N-acetylalanine.

This sequence belongs to the dynactin subunit 3 family. As to quaternary structure, subunit of dynactin, a multiprotein complex part of a tripartite complex with dynein and a adapter, such as BICDL1, BICD2 or HOOK3. The dynactin complex is built around ACTR1A/ACTB filament and consists of an actin-related filament composed of a shoulder domain, a pointed end and a barbed end. Its length is defined by its flexible shoulder domain. The soulder is composed of 2 DCTN1 subunits, 4 DCTN2 and 2 DCTN3. The 4 DCNT2 (via N-terminus) bind the ACTR1A filament and act as molecular rulers to determine the length. The pointed end is important for binding dynein-dynactin cargo adapters. Consists of 4 subunits: ACTR10, DCNT4, DCTN5 and DCTN6. The barbed end is composed of a CAPZA1:CAPZB heterodimers, which binds ACTR1A/ACTB filament and dynactin and stabilizes dynactin.

It is found in the cytoplasm. It localises to the cytoskeleton. The protein localises to the microtubule organizing center. The protein resides in the centrosome. Its subcellular location is the chromosome. It is found in the centromere. It localises to the kinetochore. The protein localises to the spindle. The protein resides in the cleavage furrow. Its subcellular location is the midbody. Functionally, part of the dynactin complex that activates the molecular motor dynein for ultra-processive transport along microtubules. Together with dynein is involved in spindle assembly and cytokinesis. This Sus scrofa (Pig) protein is Dynactin subunit 3.